We begin with the raw amino-acid sequence, 54 residues long: VVTVDCSGYPTHACTLELKPLCGSDNQTYSNKCGFCNAVAQSNGTLTLSHFGKC.

The region spanning 4–54 is the Kazal-like domain; that stretch reads VDCSGYPTHACTLELKPLCGSDNQTYSNKCGFCNAVAQSNGTLTLSHFGKC. Cystine bridges form between Cys-6-Cys-36, Cys-14-Cys-33, and Cys-22-Cys-54. A glycan (N-linked (GlcNAc...) asparagine) is linked at Asn-43.

It is found in the secreted. The chain is Ovomucoid from Leipoa ocellata (Malleefowl).